The chain runs to 457 residues: Cysteine--tRNA ligase (457 aa).

Zn(2+) is bound at residue cysteine 27. Residues 29–39 carry the 'HIGH' region motif; that stretch reads PTVYDFAHIGN. Zn(2+) contacts are provided by cysteine 211, histidine 236, and glutamate 240. The 'KMSKS' region signature appears at 269–273; sequence KMSKS. Lysine 272 is an ATP binding site.

The protein belongs to the class-I aminoacyl-tRNA synthetase family. As to quaternary structure, monomer. It depends on Zn(2+) as a cofactor.

The protein resides in the cytoplasm. The catalysed reaction is tRNA(Cys) + L-cysteine + ATP = L-cysteinyl-tRNA(Cys) + AMP + diphosphate. In Ehrlichia ruminantium (strain Welgevonden), this protein is Cysteine--tRNA ligase.